A 214-amino-acid polypeptide reads, in one-letter code: Transmembrane emp24 domain-containing protein p24delta10 (214 aa).

Residues 1-24 form the signal peptide; it reads MFLQSQKLWTMLLILAIWSPISHS. The Lumenal portion of the chain corresponds to 25 to 181; it reads LHFDLHSGRT…QDLNRSTNTK (157 aa). The 116-residue stretch at 34-149 folds into the GOLD domain; that stretch reads TKCIAEDIKS…VEVMEFEVKS (116 aa). The stretch at 164–177 forms a coiled coil; that stretch reads LRDREEEMQDLNRS. Residue Arg167 is modified to Omega-N-methylated arginine. The N-linked (GlcNAc...) asparagine glycan is linked to Asn175. The helical transmembrane segment at 182-202 threads the bilayer; it reads MAWLSVLSFFVCIGVAGMQFL. Topologically, residues 203–214 are cytoplasmic; sequence HLKTFFEKKKVI. The COPII vesicle coat-binding motif lies at 207-208; sequence FF. The short motif at 207–214 is the COPI vesicle coat-binding element; that stretch reads FFEKKKVI.

Belongs to the EMP24/GP25L family. In terms of assembly, probably oligomerizes with other members of the EMP24/GP25L family. Associates with the COPI vesicle coat (coatomer). Associates with the COPII vesicle coat (coatomer).

Its subcellular location is the endoplasmic reticulum membrane. The protein localises to the golgi apparatus. It is found in the cis-Golgi network membrane. It localises to the golgi stack membrane. In terms of biological role, involved in vesicular protein trafficking. Mainly functions in the early secretory pathway. Thought to act as cargo receptor at the lumenal side for incorporation of secretory cargo molecules into transport vesicles and to be involved in vesicle coat formation at the cytoplasmic side. The polypeptide is Transmembrane emp24 domain-containing protein p24delta10 (Arabidopsis thaliana (Mouse-ear cress)).